Here is a 350-residue protein sequence, read N- to C-terminus: Protein pelota homolog (350 aa).

Belongs to the eukaryotic release factor 1 family. Pelota subfamily. As to quaternary structure, monomer. Requires a divalent metal cation as cofactor.

Its subcellular location is the cytoplasm. Its function is as follows. May function in recognizing stalled ribosomes, interact with stem-loop structures in stalled mRNA molecules, and effect endonucleolytic cleavage of the mRNA. May play a role in the release non-functional ribosomes and degradation of damaged mRNAs. Has endoribonuclease activity. In Methanosarcina acetivorans (strain ATCC 35395 / DSM 2834 / JCM 12185 / C2A), this protein is Protein pelota homolog.